The sequence spans 119 residues: Large ribosomal subunit protein bL20c (119 aa).

Belongs to the bacterial ribosomal protein bL20 family.

The protein resides in the plastid. Its subcellular location is the chloroplast. Functionally, binds directly to 23S ribosomal RNA and is necessary for the in vitro assembly process of the 50S ribosomal subunit. It is not involved in the protein synthesizing functions of that subunit. In Oedogonium cardiacum (Filamentous green alga), this protein is Large ribosomal subunit protein bL20c.